Consider the following 269-residue polypeptide: Lck-interacting transmembrane adapter 1 (269 aa).

The Extracellular portion of the chain corresponds to 1-7 (MRPPVPS). Residues 8–28 (APLALWVLGCFSLLLWLWALC) traverse the membrane as a helical; Signal-anchor for type III membrane protein segment. S-palmitoyl cysteine attachment occurs at residues C28 and C31. At 29-269 (TACHRKRAQR…VYESIKEMGL (241 aa)) the chain is on the cytoplasmic side. A disordered region spans residues 102-133 (STRSQVPNSAFPPRQLPRAPPAAPATAPSTSS). The segment covering 115–124 (RQLPRAPPAA) has biased composition (pro residues). Residues Y137, Y175, and Y207 each carry the phosphotyrosine modification. Residues 137-140 (YSNV) form an interaction with GRB2 region. Interaction with CSK stretches follow at residues 175–178 (YACI) and 207–210 (YSRV). A phosphotyrosine; by LYN or LCK mark is found at Y242 and Y261. The segment at 242 to 245 (YEAI) is interaction with LCK and PIK3R1. An interaction with LCK, PLCG2 and PIK3R1 region spans residues 261–264 (YESI). S263 is subject to Phosphoserine.

In terms of assembly, when phosphorylated in response to TCR stimulation and/or CD4 costimulation, interacts with LCK, CSK, FYN, PTPN11/SHP2, GRB2, PIK3R1 and GRAP2. When phosphorylated in response to BCR activation, interacts with LYN, PIK3R1, PLCG2 and GRB2. Post-translationally, palmitoylation of Cys-28 and Cys-31 is required for raft targeting. In terms of processing, phosphorylated on tyrosines upon TCR activation and/or CD4 coreceptor stimulation, or upon BCR stimulation; which leads to the recruitment of SH2-containing proteins. Expressed in spleen and lung. Present in primary B-cells and peripheral T-cells (at protein level).

It localises to the cell membrane. Functionally, involved in BCR (B-cell antigen receptor)-mediated signaling in B-cells and TCR (T-cell antigen receptor)-mediated T-cell signaling in T-cells. In absence of TCR signaling, may be involved in CD4-mediated inhibition of T-cell activation. Couples activation of these receptors and their associated kinases with distal intracellular events such as calcium mobilization or MAPK activation through the recruitment of PLCG2, GRB2, GRAP2, and other signaling molecules. This is Lck-interacting transmembrane adapter 1 (Lime1) from Mus musculus (Mouse).